A 314-amino-acid chain; its full sequence is MPGPLYGRDLLSIRDLSSEEVWLVIETARQMKLRYYAGERIIPMLKGKTIALIFEKPSTRTRVSMEVAALQLGATPLTFRRDELQLARGEPIKDTARVLSRYVDAIAARVFKHESLEEMAAYASVPVINMLSDLEHPLQALADALTIYEKKGHIKGIKVVYVGDGRNNVAHSLLLVIAKLGGHIVISSPKELTPRKDILEAAQLAAKETGATIELIEDPAEAVRGADVVYTDVWVSMGEESLAEERRRLLQRYQVNEKLMSLASNNAIFMHCLPAHRGEEVTEEVIEGPWSVVWDQAENRLHAQKAVLALILAP.

Carbamoyl phosphate contacts are provided by residues 58-61 (STRT), Q85, R109, and 136-139 (HPLQ). L-ornithine-binding positions include N168, D232, and 236 to 237 (SM). Carbamoyl phosphate is bound by residues 272-273 (CL) and R300.

The protein belongs to the aspartate/ornithine carbamoyltransferase superfamily. OTCase family.

The protein resides in the cytoplasm. It catalyses the reaction carbamoyl phosphate + L-ornithine = L-citrulline + phosphate + H(+). It participates in amino-acid biosynthesis; L-arginine biosynthesis; L-arginine from L-ornithine and carbamoyl phosphate: step 1/3. Reversibly catalyzes the transfer of the carbamoyl group from carbamoyl phosphate (CP) to the N(epsilon) atom of ornithine (ORN) to produce L-citrulline. The sequence is that of Ornithine carbamoyltransferase from Hyperthermus butylicus (strain DSM 5456 / JCM 9403 / PLM1-5).